Consider the following 219-residue polypeptide: Peptide methionine sulfoxide reductase MsrA (219 aa).

Positions 1-20 (MGLFRSPRQNLPTAADALPG) are disordered. Cysteine 55 is an active-site residue.

The protein belongs to the MsrA Met sulfoxide reductase family.

It catalyses the reaction L-methionyl-[protein] + [thioredoxin]-disulfide + H2O = L-methionyl-(S)-S-oxide-[protein] + [thioredoxin]-dithiol. The enzyme catalyses [thioredoxin]-disulfide + L-methionine + H2O = L-methionine (S)-S-oxide + [thioredoxin]-dithiol. In terms of biological role, has an important function as a repair enzyme for proteins that have been inactivated by oxidation. Catalyzes the reversible oxidation-reduction of methionine sulfoxide in proteins to methionine. The polypeptide is Peptide methionine sulfoxide reductase MsrA (Rhodospirillum centenum (strain ATCC 51521 / SW)).